The sequence spans 455 residues: Inactive peptidyl-prolyl cis-trans isomerase shutdown (455 aa).

The interval 34–54 is disordered; sequence SQQNHARDLGLDSDSDSDYED. Positions 44–54 are enriched in acidic residues; the sequence is LDSDSDSDYED. The region spanning 103–192 is the PPIase FKBP-type domain; the sequence is KARVSVRYSG…LFKVEVIDYS (90 aa). 2 TPR repeats span residues 218-251 and 303-336; these read AVDLHLHGKDSVKLGRYQSAATAFERAVSSLNYC and CKALFQEGRALAALGEYNLARNAYLQAQAKQPAN.

Belongs to the FKBP6 family. As to quaternary structure, interacts with Hsp83. As to expression, strongly expressed in the germline stem cells and in 16-cell cysts. Present in the germ cells throughout embryogenesis. Defects are due to derepression of transposable elements and impaired piRNA biogenesis.

It is found in the cytoplasm. It localises to the cytoplasmic ribonucleoprotein granule. In terms of biological role, co-chaperone required during oogenesis to repress transposable elements and prevent their mobilization, which is essential for the germline integrity. Acts via the piRNA metabolic process, which mediates the repression of transposable elements during meiosis by forming complexes composed of piRNAs and Piwi proteins and govern the methylation and subsequent repression of transposons. Acts as a co-chaperone via its interaction with Hsp83/HSP90 and is required for the biogenesis of all three piRNA major populations. The sequence is that of Inactive peptidyl-prolyl cis-trans isomerase shutdown from Drosophila melanogaster (Fruit fly).